Here is a 427-residue protein sequence, read N- to C-terminus: Succinate--CoA ligase [ADP-forming] subunit beta, mitochondrial (427 aa).

A mitochondrion-targeting transit peptide spans 1-30 (MYSRKSLSLISKCGQLSRLNAQAALQARRH). One can recognise an ATP-grasp domain in the interval 39 to 284 (AQLLREYGIG…LSQEDPDEVK (246 aa)). ATP contacts are provided by residues Lys76 and 83–85 (GRG). Position 102 is a phosphoserine (Ser102). Residue Glu144 participates in ATP binding. Residues Asn236 and Asp253 each coordinate Mg(2+). Ser263 and Ser276 each carry phosphoserine. Substrate-binding positions include Asn304 and 361-363 (GIV).

The protein belongs to the succinate/malate CoA ligase beta subunit family. In terms of assembly, heterodimer of an alpha and a beta subunit. The cofactor is Mg(2+).

The protein localises to the mitochondrion. The enzyme catalyses succinate + ATP + CoA = succinyl-CoA + ADP + phosphate. The protein operates within carbohydrate metabolism; tricarboxylic acid cycle; succinate from succinyl-CoA (ligase route): step 1/1. Succinyl-CoA synthetase functions in the citric acid cycle (TCA), coupling the hydrolysis of succinyl-CoA to the synthesis of ATP and thus represents the only step of substrate-level phosphorylation in the TCA. The beta subunit provides nucleotide specificity of the enzyme and binds the substrate succinate, while the binding sites for coenzyme A and phosphate are found in the alpha subunit. This is Succinate--CoA ligase [ADP-forming] subunit beta, mitochondrial from Saccharomyces cerevisiae (strain ATCC 204508 / S288c) (Baker's yeast).